Consider the following 98-residue polypeptide: UPF0390 protein zgc136864 (98 aa).

A compositionally biased stretch (basic residues) spans 1–30; sequence MAQGKQKFKAQRPGGAKKHQNKPKGLKKGG. Disordered stretches follow at residues 1–38 and 63–98; these read MAQGKQKFKAQRPGGAKKHQNKPKGLKKGGRIIAPKKA and TQKASTSLHKKLSVLKTPAQKSGTAGAPKPAAGPSK. Positions 83–98 are enriched in low complexity; that stretch reads KSGTAGAPKPAAGPSK.

This sequence belongs to the UPF0390 family.

This is UPF0390 protein zgc136864 from Danio rerio (Zebrafish).